A 264-amino-acid chain; its full sequence is ATP synthase subunit a (264 aa).

The next 6 helical transmembrane spans lie at Thr-29–Phe-49, Val-89–Met-109, Asp-134–Ile-154, Ile-177–Leu-197, Leu-208–Val-228, and Leu-235–Val-255.

This sequence belongs to the ATPase A chain family. In terms of assembly, F-type ATPases have 2 components, CF(1) - the catalytic core - and CF(0) - the membrane proton channel. CF(1) has five subunits: alpha(3), beta(3), gamma(1), delta(1), epsilon(1). CF(0) has three main subunits: a(1), b(2) and c(9-12). The alpha and beta chains form an alternating ring which encloses part of the gamma chain. CF(1) is attached to CF(0) by a central stalk formed by the gamma and epsilon chains, while a peripheral stalk is formed by the delta and b chains.

It is found in the cell inner membrane. In terms of biological role, key component of the proton channel; it plays a direct role in the translocation of protons across the membrane. This chain is ATP synthase subunit a, found in Shewanella woodyi (strain ATCC 51908 / MS32).